We begin with the raw amino-acid sequence, 301 residues long: Lycopene elongase/hydratase (301 aa).

Positions 1–20 (MSADMAAQSESGEGGDDGRA) are disordered. 9 helical membrane-spanning segments follow: residues 39–59 (FWLYLAGPVVVGVAAAASALA), 61–81 (LFGLEPVALFAYFLVPANVFL), 110–130 (PVNTVVVAASGLLGVGLFAVA), 133–153 (VAWPWLAAHFFLAVEYSAPPF), 160–180 (LLDSVSNGLYVLPGVAAYAAV), 186–206 (PMLAVAGAWLWTMGMHTFSAI), 229–249 (TYWYCAATWVLAAVAFAAVDL), 252–272 (GALLAAYPVVVLGIVAAGVDV), and 276–296 (YWWYPVINTVVGMLITLGALW).

Belongs to the UbiA prenyltransferase family.

The protein resides in the cell membrane. It catalyses the reaction all-trans-lycopene + dimethylallyl diphosphate + H2O = dihydroisopentenyldehydrorhodopin + diphosphate. The catalysed reaction is isopentenyldehydrorhodopin + dimethylallyl diphosphate + H2O = dihydrobisanhydrobacterioruberin + diphosphate. It participates in carotenoid biosynthesis. In terms of biological role, involved in the biosynthesis of the acyclic C50 carotenoid bacterioruberin (BR). Acts as a bifunctional elongase/hydratase that catalyzes the elongation of lycopene by attaching a C(5) isoprene unit at C-2, as well as the hydroxylation of the previous end of the molecule. The enzyme acts at both ends of the substrate, and catalyzes the conversion of lycopene to the C(45) intermediate dihydroisopentenyldehydrorhodopin (DH-IDR) and the conversion of isopentenyldehydrorhodopin (IDR) to the C(50) carotenoid dihydrobisanhydrobacterioruberin (DH-BABR). Can also catalyze the conversion of lycopene to tetrahydrobisanhydrobacterioruberin (TH-BABR). This is Lycopene elongase/hydratase from Haloferax volcanii (strain ATCC 29605 / DSM 3757 / JCM 8879 / NBRC 14742 / NCIMB 2012 / VKM B-1768 / DS2) (Halobacterium volcanii).